The chain runs to 368 residues: Cytochrome P450 119 (368 aa).

Residues His76, Arg80, Thr257, Arg259, His315, and Cys317 each coordinate heme.

Belongs to the cytochrome P450 family. Heme serves as cofactor.

Its subcellular location is the cytoplasm. It catalyses the reaction 2 a phenolic donor + H2O2 = 2 a phenolic radical donor + 2 H2O. Functionally, the endogenous substrate is not known. In vitro, catalyzes the H(2)O(2)-dependent epoxidation of styrene, cis-beta-methylstyrene, and cis-stilbene with retention of stereochemistry. Is able to use cumene hydroperoxide (CHP) or tert-butyl hydroperoxide (TBHP) instead of H(2)O(2) as the electron acceptor. Can also hydroxylate fatty acids such as lauric acid. In Sulfolobus acidocaldarius (strain ATCC 33909 / DSM 639 / JCM 8929 / NBRC 15157 / NCIMB 11770), this protein is Cytochrome P450 119 (cyp119).